A 112-amino-acid chain; its full sequence is UPF0060 membrane protein Daro_2632 (112 aa).

Transmembrane regions (helical) follow at residues 7 to 27 (VLGLFAITALAEIIGCYLPWL), 34 to 54 (PVWLLIPAAVSLGLFAWLLTL), 59 to 79 (AGRIYAAYGGVYVAIALIWLW), and 89 to 109 (WDLVGSAVSLAGMAIIMLQPA).

The protein belongs to the UPF0060 family.

It is found in the cell inner membrane. The sequence is that of UPF0060 membrane protein Daro_2632 from Dechloromonas aromatica (strain RCB).